The chain runs to 195 residues: HTH-type transcriptional regulator BetI (195 aa).

The HTH tetR-type domain maps to 8 to 68; that stretch reads EIRRAQLIDA…ATMRHVLRDL (61 aa). The H-T-H motif DNA-binding region spans 31-50; sequence TLASVAQRANISTGIVSHYF.

The protein operates within amine and polyamine biosynthesis; betaine biosynthesis via choline pathway [regulation]. In terms of biological role, repressor involved in the biosynthesis of the osmoprotectant glycine betaine. It represses transcription of the choline transporter BetT and the genes of BetAB involved in the synthesis of glycine betaine. This is HTH-type transcriptional regulator BetI from Burkholderia thailandensis (strain ATCC 700388 / DSM 13276 / CCUG 48851 / CIP 106301 / E264).